A 534-amino-acid chain; its full sequence is Glucans biosynthesis protein D (534 aa).

The tat-type signal signal peptide spans 1–28 (MYRRDFLKSVTAAWVAFGLPNPLGGAFA).

It belongs to the OpgD/OpgG family. Predicted to be exported by the Tat system. The position of the signal peptide cleavage has not been experimentally proven.

Its subcellular location is the periplasm. It functions in the pathway glycan metabolism; osmoregulated periplasmic glucan (OPG) biosynthesis. Its function is as follows. Probably involved in the control of the structural glucose backbone of osmoregulated periplasmic glucans (OPGs). The sequence is that of Glucans biosynthesis protein D from Xylella fastidiosa (strain M23).